The sequence spans 339 residues: Cyclic AMP-dependent transcription factor ATF-4 (339 aa).

Disordered regions lie at residues 14–62, 153–182, and 209–313; these read GPWP…PSEL, PEEI…HTEV, and QNIS…EKAD. A compositionally biased stretch (low complexity) spans 35–55; it reads VLEGSWSPSSSSLSSFSPPAS. The segment covering 162–173 has biased composition (pro residues); it reads SPAPSVPSPPEE. Residues 211–226 show a composition bias toward low complexity; it reads ISDCSDSDSGISVSGS. A compositionally biased stretch (basic and acidic residues) spans 231–247; sequence SDLEPSSRAKPYSRPDP. In terms of domain architecture, bZIP spans 266–329; sequence VEKKLKKMEQ…QYLRDLLEEM (64 aa). The tract at residues 268–288 is basic motif; that stretch reads KKLKKMEQNKTAATRYRQKKR. Positions 294–322 are leucine-zipper; sequence LNSECSELEKKNRELSEKADSLSREIQYL. Basic and acidic residues predominate over residues 300-313; that stretch reads ELEKKNRELSEKAD.

This sequence belongs to the bZIP family. Binds DNA as a homodimer and as a heterodimer.

The protein localises to the nucleus. Its function is as follows. Transcription factor that binds the cAMP response element (CRE) (consensus: 5'-GTGACGT[AC][AG]-3') and displays two biological functions, as regulator of metabolic and redox processes under normal cellular conditions, and as master transcription factor during integrated stress response (ISR). Binds to asymmetric CRE's as a heterodimer and to palindromic CRE's as a homodimer. Core effector of the ISR, which is required for adaptation to various stress such as endoplasmic reticulum (ER) stress, amino acid starvation, mitochondrial stress or oxidative stress. During ISR, atf4 translation is induced via an alternative ribosome translation re-initiation mechanism in response to eif2s1/eIF-2-alpha phosphorylation, and stress-induced atf4 acts as a master transcription factor of stress-responsive genes in order to promote cell recovery. Promotes the transcription of genes linked to amino acid sufficiency and resistance to oxidative stress to protect cells against metabolic consequences of ER oxidation. In the absence of stress, atf4 translation is at low levels and it is required for normal metabolic processes such as embryonic lens formation, fetal liver hematopoiesis, bone development and synaptic plasticity. Acts as a regulator of osteoblast differentiation by promoting expression of osteoblast-specific genes. Regulates the circadian expression of the core clock components. Mainly acts as a transcriptional activator in cellular stress adaptation, but it can also act as a transcriptional repressor. This chain is Cyclic AMP-dependent transcription factor ATF-4 (atf4), found in Danio rerio (Zebrafish).